A 1066-amino-acid polypeptide reads, in one-letter code: Cytoplasmic dynein 2 intermediate chain 1 (1066 aa).

Disordered regions lie at residues 22-366 (LWAI…ENAR) and 381-408 (YEDD…LEEL). Ser30 is subject to Phosphoserine. Basic and acidic residues-rich tracts occupy residues 30–135 (SKEE…EELR), 147–171 (ETRD…RSEE), 180–256 (DEDR…EERH), 264–308 (GFHF…KRDG), and 316–336 (NLVR…HEEG). At Ser247 the chain carries Phosphoserine. Composition is skewed to acidic residues over residues 351-362 (ETVEIEKEETDL) and 381-397 (YEDD…ESSN). The segment covering 399-408 (PESREKLEEL) has biased composition (basic and acidic residues). A binding to the DYNLT2B-DYNLT1/DYNLT3 dimer region spans residues 473-552 (ASHRQKSRTQ…DIQTEEIETR (80 aa)). 4 WD repeats span residues 694–734 (ICES…RLHY), 775–821 (VHKK…KADI), 907–947 (IRPV…PLLQ), and 952–992 (TDSH…LGPV).

Belongs to the dynein light intermediate chain family. Intermediate chain of the cytoplasmic dynein complex 2, a multisubunit complex, composed at least of eleven different proteins. The cytoplasmic dynein 2 complex consists of two catalytic heavy chains (HCs) and a number of non-catalytic subunits presented by intermediate chains (ICs), light intermediate chains (LICs) and light chains (LCs). Among them, a heavy chain (DYNC2H1), two intermediate chains (DYNC2I2 and DYNC2I1), a light intermediate chain (DYNC2LI1), and a light chain (DYNLT2B) are unique to the cytoplasmic dynein complex 2, but a subset of the light chains are also shared by dynein-1 and dynein-2 complexes. Interacts with DYNC2I2; their C-terminal domains each bind a copy of the heavy chain, and their extended N-terminal regions are held together by an array of light chain dimers. Interacts with DYNLT2B. Interacts (via the N-terminal half) with DYNLT2B-DYNLT1 dimer or with DYNLT2B-DYNLT3 dimer; this interaction is crucial for retrograde trafficking of ciliary proteins. As to expression, expressed in chondrocytes (at protein level).

It localises to the cell projection. Its subcellular location is the cilium. The protein localises to the cytoplasm. It is found in the cytoskeleton. The protein resides in the microtubule organizing center. It localises to the centrosome. In terms of biological role, acts as one of several non-catalytic accessory components of the cytoplasmic dynein 2 complex (dynein-2 complex), a motor protein complex that drives the movement of cargos along microtubules within cilia and flagella in concert with the intraflagellar transport (IFT) system. DYNC2I1 plays a major role in retrograde ciliary protein trafficking in cilia and flagella. Also requires to maintain a functional transition zone. The chain is Cytoplasmic dynein 2 intermediate chain 1 from Homo sapiens (Human).